A 654-amino-acid polypeptide reads, in one-letter code: Pentatricopeptide repeat-containing protein At5g61400 (654 aa).

16 PPR repeats span residues 37–71, 74–104, 131–161, 163–197, 198–232, 233–267, 268–302, 303–337, 338–372, 373–407, 408–442, 443–477, 478–512, 513–543, 548–582, and 583–617; these read SSFS…RVSK, DLQS…LIER, SIGV…MKCS, DSKA…GLVP, DVHI…GIKP, NVYI…GVLP, NLYT…ELLP, NVVV…GVDP, NLYV…NLSP, DVFT…RIFP, SSAT…GVEP, NIIT…GIVP, DVVT…GIHP, NDHT…NNQQ, NHVG…GITP, and DICS…GILP.

This sequence belongs to the PPR family. P subfamily.

In Arabidopsis thaliana (Mouse-ear cress), this protein is Pentatricopeptide repeat-containing protein At5g61400.